A 432-amino-acid chain; its full sequence is Enolase (432 aa).

Gln164 is a (2R)-2-phosphoglycerate binding site. Glu206 (proton donor) is an active-site residue. Positions 243, 284, and 311 each coordinate Mg(2+). (2R)-2-phosphoglycerate-binding residues include Lys336, Arg365, Ser366, and Lys387. The Proton acceptor role is filled by Lys336.

It belongs to the enolase family. The cofactor is Mg(2+).

It is found in the cytoplasm. The protein resides in the secreted. Its subcellular location is the cell surface. The enzyme catalyses (2R)-2-phosphoglycerate = phosphoenolpyruvate + H2O. It functions in the pathway carbohydrate degradation; glycolysis; pyruvate from D-glyceraldehyde 3-phosphate: step 4/5. Catalyzes the reversible conversion of 2-phosphoglycerate (2-PG) into phosphoenolpyruvate (PEP). It is essential for the degradation of carbohydrates via glycolysis. This is Enolase from Synechococcus sp. (strain JA-3-3Ab) (Cyanobacteria bacterium Yellowstone A-Prime).